Consider the following 242-residue polypeptide: 1-(5-phosphoribosyl)-5-[(5-phosphoribosylamino)methylideneamino] imidazole-4-carboxamide isomerase (242 aa).

Catalysis depends on Asp7, which acts as the Proton acceptor. Asp129 acts as the Proton donor in catalysis.

It belongs to the HisA/HisF family.

The protein localises to the cytoplasm. It carries out the reaction 1-(5-phospho-beta-D-ribosyl)-5-[(5-phospho-beta-D-ribosylamino)methylideneamino]imidazole-4-carboxamide = 5-[(5-phospho-1-deoxy-D-ribulos-1-ylimino)methylamino]-1-(5-phospho-beta-D-ribosyl)imidazole-4-carboxamide. The protein operates within amino-acid biosynthesis; L-histidine biosynthesis; L-histidine from 5-phospho-alpha-D-ribose 1-diphosphate: step 4/9. The protein is 1-(5-phosphoribosyl)-5-[(5-phosphoribosylamino)methylideneamino] imidazole-4-carboxamide isomerase of Pseudoalteromonas translucida (strain TAC 125).